The following is a 334-amino-acid chain: UDP-N-acetylglucosamine 4,6-dehydratase (inverting) (334 aa).

NADP(+) contacts are provided by residues 13 to 16 (TGSF), 37 to 42 (SRDELK), 61 to 62 (DV), alanine 81, lysine 85, and 123 to 124 (LS). Residue lysine 85 coordinates substrate. Residue lysine 127 is part of the active site. NADP(+) is bound by residues tyrosine 135 and lysine 139. Substrate is bound at residue asparagine 167. 168 to 172 (VVGSR) serves as a coordination point for NADP(+). Substrate is bound by residues valine 175, threonine 193, arginine 252, and glutamate 255.

This sequence belongs to the polysaccharide synthase family. Homohexamer. Requires NADP(+) as cofactor.

It catalyses the reaction UDP-N-acetyl-alpha-D-glucosamine = UDP-2-acetamido-2,6-dideoxy-beta-L-arabino-hex-4-ulose + H2O. Catalyzes the first step in the biosynthesis of pseudaminic acid, a sialic-acid-like sugar that is used to modify flagellin. Has both C6 dehydratase and C5 epimerase activities that result in the production of both UDP-2-acetamido-2,6-dideoxy-beta-L-arabino-4-hexulose and UDP-2-acetamido-2,6-dideoxy-alpha-D-xylo-4-hexulose. The sequence is that of UDP-N-acetylglucosamine 4,6-dehydratase (inverting) (pseB) from Campylobacter jejuni subsp. jejuni serotype O:23/36 (strain 81-176).